The following is a 355-amino-acid chain: Uroporphyrinogen decarboxylase (355 aa).

Substrate is bound by residues 27-31 (RQAGR), Asp-77, Tyr-154, Thr-209, and His-327.

The protein belongs to the uroporphyrinogen decarboxylase family. Homodimer.

It localises to the cytoplasm. The enzyme catalyses uroporphyrinogen III + 4 H(+) = coproporphyrinogen III + 4 CO2. It participates in porphyrin-containing compound metabolism; protoporphyrin-IX biosynthesis; coproporphyrinogen-III from 5-aminolevulinate: step 4/4. Its function is as follows. Catalyzes the decarboxylation of four acetate groups of uroporphyrinogen-III to yield coproporphyrinogen-III. The chain is Uroporphyrinogen decarboxylase from Yersinia pseudotuberculosis serotype O:1b (strain IP 31758).